The following is a 264-amino-acid chain: Thymidylate synthase (264 aa).

R21 is a binding site for dUMP. H51 is a (6R)-5,10-methylene-5,6,7,8-tetrahydrofolate binding site. 126–127 is a dUMP binding site; sequence RR. C146 acts as the Nucleophile in catalysis. DUMP is bound by residues 166 to 169, N177, and 207 to 209; these read RSAD and HIY. D169 lines the (6R)-5,10-methylene-5,6,7,8-tetrahydrofolate pocket. S263 serves as a coordination point for (6R)-5,10-methylene-5,6,7,8-tetrahydrofolate.

This sequence belongs to the thymidylate synthase family. Bacterial-type ThyA subfamily. As to quaternary structure, homodimer.

The protein localises to the cytoplasm. The catalysed reaction is dUMP + (6R)-5,10-methylene-5,6,7,8-tetrahydrofolate = 7,8-dihydrofolate + dTMP. Its pathway is pyrimidine metabolism; dTTP biosynthesis. Functionally, catalyzes the reductive methylation of 2'-deoxyuridine-5'-monophosphate (dUMP) to 2'-deoxythymidine-5'-monophosphate (dTMP) while utilizing 5,10-methylenetetrahydrofolate (mTHF) as the methyl donor and reductant in the reaction, yielding dihydrofolate (DHF) as a by-product. This enzymatic reaction provides an intracellular de novo source of dTMP, an essential precursor for DNA biosynthesis. In Exiguobacterium sp. (strain ATCC BAA-1283 / AT1b), this protein is Thymidylate synthase.